The following is a 385-amino-acid chain: Deoxyguanosinetriphosphate triphosphohydrolase-like protein (385 aa).

The HD domain occupies 75–204 (RLTHSLEVAQ…INFADEIAYN (130 aa)).

The protein belongs to the dGTPase family. Type 2 subfamily.

In Geobacter sulfurreducens (strain ATCC 51573 / DSM 12127 / PCA), this protein is Deoxyguanosinetriphosphate triphosphohydrolase-like protein.